Here is a 157-residue protein sequence, read N- to C-terminus: Probable succinate transporter subunit YjjB (157 aa).

The next 4 membrane-spanning stretches (helical) occupy residues 8–28 (LALMQDMILSAIPAVGFAMVF), 55–75 (AGFNIEWSTFMASLLVGSIGI), 87–107 (VFTVAAVIPMFPGISAYTAMI), and 129–149 (FLKASSIVGALSIGLSVPGLW).

It belongs to the ThrE exporter (TC 2.A.79) family. The transporter is composed of YjjB and YjjP.

The protein localises to the cell inner membrane. In terms of biological role, involved in succinate export with YjjP. Both proteins are required for export. The protein is Probable succinate transporter subunit YjjB of Salmonella agona (strain SL483).